The sequence spans 506 residues: Anaerobic nitric oxide reductase transcription regulator NorR (506 aa).

D57 is modified (4-aspartylphosphate). In terms of domain architecture, Sigma-54 factor interaction spans M187–V416. Residues G215 to E222 and A278 to E287 each bind ATP. The segment at residues W481–K500 is a DNA-binding region (H-T-H motif).

The protein operates within nitrogen metabolism; nitric oxide reduction. Required for the expression of anaerobic nitric oxide (NO) reductase, acts as a transcriptional activator for at least the norVW operon. Activation also requires sigma-54. This is Anaerobic nitric oxide reductase transcription regulator NorR from Salmonella paratyphi A (strain ATCC 9150 / SARB42).